The sequence spans 379 residues: Alkanesulfonate monooxygenase (379 aa).

The protein belongs to the SsuD family.

It catalyses the reaction an alkanesulfonate + FMNH2 + O2 = an aldehyde + FMN + sulfite + H2O + 2 H(+). Its function is as follows. Catalyzes the desulfonation of aliphatic sulfonates. This chain is Alkanesulfonate monooxygenase, found in Pseudomonas syringae pv. syringae (strain B728a).